A 1588-amino-acid chain; its full sequence is MSLTSWFLVSSGGTRHRLPREMIFVGRDDCELMLQSRSVDKQHAVINYDASMDEHLVKDLGSLNGTFVNDVRIPEQTYITLKLEDKLRFGYDTNLFTVVRGEMRVPEEALKHEKFTIQLQLSQKSSESELPKSASAKGTDSKVEAAAEVQPRATEALKSEEKPMDVSAMPRGTPLYGQPSWWGDAEEDEQRAFKANGKPEGKSQEAGASGCSTEAKHVEGQSAAASEEALFPFCREPSYFEIPTKEFQQPSQIAESTIHEIPTKDTPSSHTAGAGHASFTIEFDDSTPGKVTIRDHVTKFTSDQRHKSKKASPGTQDLPGIQTGMMAPENKVADWLAQNNPPQMVWERTEEDSKSIKSDVPVYLKRLKGNKHDDGTQSDSENAGAHRRCSKRATLEEHLRRHHSEQKKKAQSTEKHQEQAATSSTHHRGGHGVPHGKLLKQKSEEPSVSLPFLQTALLRSSGSLGHRPSQEMDVMLKNQATSASSEKDNDDDQSDKGTYTIELENPNSEEVEARKMIDKVFGVDDNQDYNRPIINEKHKGLIKDWALNSAAVVMEERKPLSTPGFHNSEEAISSSGSKRWVSQWASLAANHTRHDPEERLMELSATVENETDTGDAGVSLRSTSCTTSLASQGERKRRTLPQLPNEEKLLESSRAKVVPQRSEIGEKQDTELQEKEAQVYQSEKHDADRGLSKMSRAVNGESPKTGGDGKALLHSGSSSSKEKSETEKETSLVKQTLAKMQQQEQKEQAQWTPTKFPSKNALGHIDKCREESSKQESQLLEKVSGHSTSKGDRVIQNESKRRKAEEIPKCQASKGDKKESSKSLVRQGSFTIDKPSSNIPIELIPHINKQNSSVPTALALTSASRLRERSDSLDTDSSMDTTLILKDTEAVMAFLEAKLREDNNKTDEGPDTPSYNRDNSISPESDVDTASTISLVTGETERKSTQKRKSFTSLYKDRCSTSSPSKDVTKSGSREKIEKKAKSRSADIGARADGRKFVQSSGRIRQPSIDLTDDDQTSSVPHSAISDIMSSDQETYSCKSHGRTPLTSADEHNIHSKLEGGKATKSKTSPVASGSTSKSTTLPRPRPTRTSLLRRARLGEASDSELADADKASVASEVSTTSSTSKPPTGRRTISRIDLLAQPRRTRLGSLSARSDSEATISRSSASARTAEAVIRSGARLVPSDKLSPRTRANSISRLSDSKVKSMSSTHGSPSVNSRWRRFPTDYASTSEDEFGSNRNSPKHTRLRTSPALKTTRMQSTGSAMPASSSFKHRIKEQEDYIRDWTAHREEIARISQDLALIAREINDVAGEIDSVTSSGTAPSTTVSTAATTPGSAIDTREEVGDLHGEMHKLVDRVFDESLNFRKIPPLVHSKTPEGNNGRSVDSRPQPAEHPDHLTITRRRTWSRDEVMGDNLLLSSVFQFSRKIRQSIDKTAGKIRILFKDKDRNWDDIENKLRAESEVPIVKTSSMEISSILQELKRVEKQLQVINAMIDPDGTLEALNNMGFPNAILPSPPKQKSSPVNNHSSPSQTPALCPPETRALHPAAAGVAAAASTEFENAESEADFSIHFNRFNPDGEEEDVTVHE.

The FHA domain occupies 23–73 (IFVGRDDCELMLQSRSVDKQHAVINYDASMDEHLVKDLGSLNGTFVNDVRI). Disordered regions lie at residues 121–172 (LSQK…MPRG), 299–323 (KFTSDQRHKSKKASPGTQDLPGIQT), 338–447 (QNNP…EEPS), and 461–508 (SGSL…NPNS). The residue at position 141 (Ser-141) is a Phosphoserine. Basic and acidic residues predominate over residues 155–164 (EALKSEEKPM). The segment covering 347–357 (ERTEEDSKSIK) has biased composition (basic and acidic residues). Phosphoserine is present on residues Ser-355 and Ser-358. Position 363 is a phosphotyrosine (Tyr-363). Residues 407–418 (KKKAQSTEKHQE) are compositionally biased toward basic and acidic residues. A phosphoserine mark is found at Ser-443, Ser-463, and Ser-494. Thr-498 is modified (phosphothreonine). Residues Ser-568, Ser-577, Ser-628, and Ser-631 each carry the phosphoserine modification. The disordered stretch occupies residues 602–854 (ELSATVENET…PHINKQNSSV (253 aa)). Over residues 620–631 (LRSTSCTTSLAS) the composition is skewed to polar residues. Thr-639 bears the Phosphothreonine mark. A compositionally biased stretch (basic and acidic residues) spans 645–654 (NEEKLLESSR). Position 662 is a phosphoserine (Ser-662). Residues 663–691 (EIGEKQDTELQEKEAQVYQSEKHDADRGL) are compositionally biased toward basic and acidic residues. At Ser-718 the chain carries Phosphoserine. The span at 720–731 (SKEKSETEKETS) shows a compositional bias: basic and acidic residues. Position 752 is a phosphothreonine (Thr-752). Composition is skewed to basic and acidic residues over residues 764 to 774 (HIDKCREESSK) and 789 to 821 (SKGDRVIQNESKRRKAEEIPKCQASKGDKKESS). Residues 822–839 (KSLVRQGSFTIDKPSSNI) show a composition bias toward polar residues. Phosphoserine is present on residues Ser-829, Ser-870, and Ser-872. Residues 844–1588 (IPHINKQNSS…GEEEDVTVHE (745 aa)) are targeting to microtubules. Residues 899–908 (LREDNNKTDE) are compositionally biased toward basic and acidic residues. Disordered stretches follow at residues 899 to 1222 (LRED…RWRR) and 1228 to 1247 (ASTSEDEFGSNRNSPKHTRL). Phosphothreonine occurs at positions 906 and 912. The segment covering 913–937 (PSYNRDNSISPESDVDTASTISLVT) has biased composition (polar residues). Phosphoserine is present on residues Ser-922, Ser-925, and Ser-950. The span at 967–980 (DVTKSGSREKIEKK) shows a compositional bias: basic and acidic residues. Ser-1008 carries the post-translational modification Phosphoserine. Thr-1012 carries the phosphothreonine modification. Positions 1028 to 1038 (IMSSDQETYSC) are enriched in polar residues. Position 1047 is a phosphothreonine (Thr-1047). The residue at position 1048 (Ser-1048) is a Phosphoserine. Residues 1049-1062 (ADEHNIHSKLEGGK) are compositionally biased toward basic and acidic residues. Residues 1075 to 1093 (STSKSTTLPRPRPTRTSLL) are compositionally biased toward low complexity. Ser-1102, Ser-1104, Ser-1122, Ser-1123, Ser-1135, Ser-1150, and Ser-1155 each carry phosphoserine. The tract at residues 1103-1588 (DSELADADKA…GEEEDVTVHE (486 aa)) is targeting to centrosomes. Residues 1112–1128 (ASVASEVSTTSSTSKPP) show a composition bias toward low complexity. Residues 1158–1173 (EATISRSSASARTAEA) are compositionally biased toward low complexity. Phosphoserine is present on residues Ser-1188, Ser-1195, Ser-1200, Ser-1229, Ser-1231, Ser-1241, Ser-1260, and Ser-1270. Positions 1191–1218 (TRANSISRLSDSKVKSMSSTHGSPSVNS) are enriched in polar residues. The interval 1315–1334 (SVTSSGTAPSTTVSTAATTP) is disordered. Ser-1362 is subject to Phosphoserine. The disordered stretch occupies residues 1370–1398 (PLVHSKTPEGNNGRSVDSRPQPAEHPDHL). The stretch at 1467 to 1495 (KTSSMEISSILQELKRVEKQLQVINAMID) forms a coiled coil. The tract at residues 1511-1540 (AILPSPPKQKSSPVNNHSSPSQTPALCPPE) is disordered. Over residues 1518-1534 (KQKSSPVNNHSSPSQTP) the composition is skewed to polar residues. Phosphoserine occurs at positions 1521 and 1522.

This sequence belongs to the CEP170 family. In terms of assembly, interacts with CCDC68 and CCDC120; leading to recruitment to centrosomes. Interacts with PLK1. Interacts with NIN. Interacts with FHDC1. Interacts with CCDC61. Interacts with TBK1; efficient complex formation may be dependent on the presence of CCDC61. Post-translationally, phosphorylated; probably by PLK1.

The protein localises to the cytoplasm. Its subcellular location is the cytoskeleton. It localises to the microtubule organizing center. The protein resides in the centrosome. It is found in the centriole. The protein localises to the spindle. In terms of biological role, plays a role in microtubule organization. Required for centriole subdistal appendage assembly. The chain is Centrosomal protein of 170 kDa (Cep170) from Mus musculus (Mouse).